The sequence spans 30 residues: QDYCAQEGQQEVQRKDLSDLERYLRQSRQR.

It belongs to the 2S seed storage albumins family. The mature protein is a heterodimer of a small and a large chain linked by 2 disulfide bonds. Extracted from castor bean.

Functionally, this is a 2S seed storage protein. Inhibits spore germination in R.solani and F.oxysporum. Exhibits anti-trypsin activity. This Ricinus communis (Castor bean) protein is 2S seed storage-like protein.